A 237-amino-acid polypeptide reads, in one-letter code: Phosphoribosylaminoimidazole-succinocarboxamide synthase (237 aa).

The protein belongs to the SAICAR synthetase family.

The catalysed reaction is 5-amino-1-(5-phospho-D-ribosyl)imidazole-4-carboxylate + L-aspartate + ATP = (2S)-2-[5-amino-1-(5-phospho-beta-D-ribosyl)imidazole-4-carboxamido]succinate + ADP + phosphate + 2 H(+). Its pathway is purine metabolism; IMP biosynthesis via de novo pathway; 5-amino-1-(5-phospho-D-ribosyl)imidazole-4-carboxamide from 5-amino-1-(5-phospho-D-ribosyl)imidazole-4-carboxylate: step 1/2. This is Phosphoribosylaminoimidazole-succinocarboxamide synthase from Yersinia enterocolitica serotype O:8 / biotype 1B (strain NCTC 13174 / 8081).